We begin with the raw amino-acid sequence, 189 residues long: UPF0251 protein MTH_1178 (189 aa).

It belongs to the UPF0251 family.

This Methanothermobacter thermautotrophicus (strain ATCC 29096 / DSM 1053 / JCM 10044 / NBRC 100330 / Delta H) (Methanobacterium thermoautotrophicum) protein is UPF0251 protein MTH_1178.